Here is a 575-residue protein sequence, read N- to C-terminus: FAD-linked oxidoreductase asqF (575 aa).

An N-terminal signal peptide occupies residues 1–23; that stretch reads MALFRLSAAIVVIFLYIWSPSQR. Residues Asn45 and Asn80 are each glycosylated (N-linked (GlcNAc...) asparagine). An FAD-binding PCMH-type domain is found at 118–306; sequence NQGRIPLYAA…VRVTMRTYPD (189 aa). His156 carries the pros-8alpha-FAD histidine modification. Asn370 carries N-linked (GlcNAc...) asparagine glycosylation.

Belongs to the oxygen-dependent FAD-linked oxidoreductase family. FAD serves as cofactor.

It catalyses the reaction peniprequinolone + A = yaequinolone E + AH2. The protein operates within secondary metabolite biosynthesis. Its pathway is alkaloid biosynthesis. It functions in the pathway mycotoxin biosynthesis. Its function is as follows. FAD-linked oxidoreductase; part of the gene cluster that mediates the biosynthesis of the aspoquinolone mycotoxins. Within the pathway, asqF performs FAD-dependent dehydrogenation of the dimethylallyl quinolone peniprequinolone to yield the conjugated aryl diene yaequinolone E. The first step of the pathway is catalyzed by the nonribosomal peptide synthetase asqK that condenses anthranilic acid and O-methyl-L-tyrosine to produce 4'-methoxycyclopeptin. 4'-methoxycyclopeptin is then converted to 4'-methoxydehydrocyclopeptin by the ketoglutarate-dependent dioxygenase asqJ. AsqJ also converts its first product 4'-methoxydehydrocyclopeptin to 4'-methoxycyclopenin. The following conversion of 4'-methoxycyclopenin into 4'-methoxyviridicatin is catalyzed by the cyclopenase asqI. 4'-methoxyviridicatin is the precursor of quinolone natural products, and is further converted to quinolinone B. The prenyltransferase asqH1 then catalyzes the canonical Friedel-Crafts alkylation of quinolinone B with dimethylallyl cation to yield dimethylallyl quinolone, which is subjected to FAD-dependent dehydrogenation by the FAD-linked oxidoreductase asqF to yield conjugated aryl diene. The delta(3') double bond then serves as the site of the second alkylation with DMAPP catalyzed by the prenyltransferase asqH2 to yield a carbenium ion intermediate, which can be attacked by H(2)O to yield a styrenyl quinolone containing a C3'-hydroxyprenyl chain. The FAD-dependent monooxygenase asqG performs epoxidation of the terminal C7'-C8' olefin. Finally, after dehydratation of the epoxide at C3 by asqC, the quinolone epoxide rearrangement protein asqO catalyzes an enzymatic 3-exo-tet cyclization to yield the cyclopropyl-THF ring system in aspoquinolone. The protein is FAD-linked oxidoreductase asqF of Emericella nidulans (strain FGSC A4 / ATCC 38163 / CBS 112.46 / NRRL 194 / M139) (Aspergillus nidulans).